Here is a 1645-residue protein sequence, read N- to C-terminus: Thrombospondin type-1 domain-containing protein 7A (1645 aa).

An N-terminal signal peptide occupies residues 1 to 38; the sequence is MGLRAGRLASPSRGVLQLLRLPLLLLLLLSSGARGAAA. Over 39-1595 the chain is Extracellular; that stretch reads QGDTEVPTLY…FGPDGRLKTW (1557 aa). 3 TSP type-1 domains span residues 46–105, 109–181, and 183–236; these read TLYL…KVCD, ELYD…IPCQ, and DCIV…NPCE. N223 carries an N-linked (GlcNAc...) asparagine glycan. The segment at 255–300 is disordered; sequence PHTRQARQARRRGKNKEREKERGKAVKDPEARELIKKKRNRNRQNR. Residues 256–304 are a coiled coil; sequence HTRQARQARRRGKNKEREKERGKAVKDPEARELIKKKRNRNRQNRQENR. Over residues 258 to 269 the composition is skewed to basic residues; sequence RQARQARRRGKN. The span at 270–288 shows a compositional bias: basic and acidic residues; the sequence is KEREKERGKAVKDPEAREL. Positions 289 to 298 are enriched in basic residues; that stretch reads IKKKRNRNRQ. Residue N321 is glycosylated (N-linked (GlcNAc...) asparagine). 16 consecutive TSP type-1 domains span residues 349-405, 412-499, 501-563, 623-684, 685-758, 760-820, 821-893, 895-948, 949-1022, 1024-1084, 1085-1152, 1154-1208, 1209-1272, 1274-1329, 1330-1400, and 1402-1463; these read ECQV…VSQG, ATYG…VPCP, ECEV…PSCY, DCVL…HPCT, VYHW…LPCR, DCVV…PTCH, SYRW…IPCQ, DCQF…CPCD, KYNA…IPCP, DCKL…SDCN, QYIW…LPCP, DCVI…KNCY, HYDY…VECP, NCQL…KPCY, RWQY…QPCP, and DCYL…GQCY. Disulfide bonds link C424–C494, C444–C498, and C455–C483. N-linked (GlcNAc...) asparagine glycosylation occurs at N439. A glycan (N-linked (GlcNAc...) asparagine) is linked at N489. 2 disulfide bridges follow: C624–C666 and C635–C639. Residue N668 is glycosylated (N-linked (GlcNAc...) asparagine). 7 cysteine pairs are disulfide-bonded: C678–C683, C696–C753, C717–C757, C728–C741, C761–C803, C772–C776, and C813–C819. N-linked (GlcNAc...) asparagine glycosylation occurs at N706. N-linked (GlcNAc...) asparagine glycosylation occurs at N957. 6 disulfide bridges follow: C961–C1017, C983–C1021, C994–C1007, C1025–C1062, C1036–C1040, and C1079–C1083. N-linked (GlcNAc...) asparagine glycosylation occurs at N1032. An intrachain disulfide couples C1201 to C1207. N1213 carries an N-linked (GlcNAc...) asparagine glycan. 12 disulfides stabilise this stretch: C1220/C1267, C1228/C1271, C1239/C1252, C1275/C1313, C1286/C1290, C1323/C1328, C1339/C1395, C1346/C1399, C1357/C1376, C1403/C1447, C1414/C1418, and C1457/C1462. N-linked (GlcNAc...) asparagine glycosylation occurs at N1264. N-linked (GlcNAc...) asparagine glycosylation is present at N1354. Residues N1488 and N1535 are each glycosylated (N-linked (GlcNAc...) asparagine). The helical transmembrane segment at 1596 to 1616 threads the bilayer; it reads VYGVAAGAFVLLVFIVSMIYL. The Cytoplasmic segment spans residues 1617-1645; sequence ACKKPKKPQRRQNNRLKPLTLAYDGDADM.

Proteolytic cleavage in the extracellular region generates a 210 kDa soluble form. In terms of processing, extensively N-glycosylated. Detected on kidney podocytes along the glomerular capillary wall (at protein level).

It is found in the cell membrane. It localises to the cell projection. The protein resides in the secreted. Plays a role in actin cytoskeleton rearrangement. Functionally, the soluble form promotes endothelial cell migration and filopodia formation during sprouting angiogenesis via a FAK-dependent mechanism. The chain is Thrombospondin type-1 domain-containing protein 7A (Thsd7a) from Mus musculus (Mouse).